The primary structure comprises 163 residues: 3-isopropylmalate dehydratase small subunit (163 aa).

It belongs to the LeuD family. LeuD type 2 subfamily. Heterodimer of LeuC and LeuD.

The enzyme catalyses (2R,3S)-3-isopropylmalate = (2S)-2-isopropylmalate. It participates in amino-acid biosynthesis; L-leucine biosynthesis; L-leucine from 3-methyl-2-oxobutanoate: step 2/4. Catalyzes the isomerization between 2-isopropylmalate and 3-isopropylmalate, via the formation of 2-isopropylmaleate. The chain is 3-isopropylmalate dehydratase small subunit from Thermococcus kodakarensis (strain ATCC BAA-918 / JCM 12380 / KOD1) (Pyrococcus kodakaraensis (strain KOD1)).